A 338-amino-acid polypeptide reads, in one-letter code: UPF0324 membrane protein TauZ (338 aa).

The next 10 membrane-spanning stretches (helical) occupy residues 12-31, 36-55, 75-92, 96-118, 125-147, 162-184, 191-213, 223-245, 258-280, and 315-337; these read IEAA…TAQF, YGAP…NFLA, LGVA…LAAL, AIAL…SRLV, ALLT…AAVL, LSVT…FFGF, VFLG…IGPE, LIRV…ARGL, PGFV…PAAV, and AIAL…LHVL.

Belongs to the UPF0324 family.

The protein localises to the cell membrane. This Paracoccus denitrificans protein is UPF0324 membrane protein TauZ (tauZ).